Consider the following 304-residue polypeptide: tRNA pseudouridine synthase B (304 aa).

Asp-48 (nucleophile) is an active-site residue.

Belongs to the pseudouridine synthase TruB family. Type 1 subfamily.

The enzyme catalyses uridine(55) in tRNA = pseudouridine(55) in tRNA. Responsible for synthesis of pseudouridine from uracil-55 in the psi GC loop of transfer RNAs. This chain is tRNA pseudouridine synthase B, found in Pseudomonas aeruginosa (strain UCBPP-PA14).